Here is a 977-residue protein sequence, read N- to C-terminus: Serine/threonine-protein kinase/endoribonuclease IRE1 (977 aa).

Positions 1-20 (MPARWLLLLLALLLPPPGPG) are cleaved as a signal peptide. At 21 to 445 (SFGRTSTVTL…EAPVDSMLKD (425 aa)) the chain is on the lumenal side. N-linked (GlcNAc...) asparagine glycosylation occurs at asparagine 178. Residues 446-466 (MATIILSTFLLVGWVAFIITY) form a helical membrane-spanning segment. Topologically, residues 467-977 (PLSVHQQRQL…PQPPVIPYAL (511 aa)) are cytoplasmic. Residues 498–559 (FHPHGDLTQD…PSLEQDDEDE (62 aa)) form a disordered region. Positions 513–551 (SSGPFSESSGTSSPSPSPRASNHSLHPSSSASRAGTSPS) are enriched in low complexity. The Protein kinase domain maps to 571–832 (FCPKDVLGHG…AKHVLKHPFF (262 aa)). Residues 577–585 (LGHGAEGTI), lysine 599, and 643–645 (ELC) contribute to the ATP site. Catalysis depends on aspartate 688, which acts as the Proton acceptor; for protein kinase activity. ATP is bound by residues 690–693 (KPHN) and aspartate 711. Phosphoserine is present on residues serine 724 and serine 729. Residues 835-963 (LEKQLQFFQD…ERLFQTYYWH (129 aa)) enclose the KEN domain. Residues 906 to 907 (NK) are interacts with hydroxy-aryl-aldehyde inhibitors.

The protein belongs to the protein kinase superfamily. Ser/Thr protein kinase family. In terms of assembly, monomer. Homodimer; disulfide-linked; homodimerization takes place in response to endoplasmic reticulum stress and promotes activation of the kinase and endoribonuclease activities. Dimer formation is driven by hydrophobic interactions within the N-terminal luminal domains and stabilized by disulfide bridges. Interacts (via the luminal region) with DNAJB9/ERdj4; interaction takes place in unstressed cells and promotes recruitment of HSPA5/BiP. Interacts (via the luminal region) with HSPA5/BiP; HSPA5/BiP is a negative regulator of the unfolded protein response (UPR) that prevents homodimerization of ERN1/IRE1 and subsequent activation of the protein. Interaction with HSPA5 also competitively inhibits ERN1 interaction with MANF. Interacts with PDIA6, a negative regulator of the UPR; the interaction is direct and disrupts homodimerization. Interacts with DAB2IP (via PH domain); the interaction occurs in a endoplasmic reticulum stress-induced dependent manner and is required for subsequent recruitment of TRAF2 to ERN1/IRE1. Interacts with TAOK3 and TRAF2. Interacts with RNF13. Interacts with LACC1. Interacts (when unphosphorylated) with DDRGK1; interaction is dependent on UFM1 and takes place in response to endoplasmic reticulum stress, regulating ERN1/IRE1-alpha stability. Interacts (via N-terminus) with P4HB/PDIA1; the interaction is enhanced by phosphorylation of P4HB by FAM20C in response to endoplasmic reticulum stress and results in attenuation of ERN1 activity. Interacts with TMBIM6; this interaction inhibits ERN1 activity. Interacts (via luminal domain) with MANF (via C-terminus); the interaction is decreased in the presence of increasing concentrations of Ca(2+). The cofactor is Mg(2+). Post-translationally, autophosphorylated following homodimerization. Autophosphorylation promotes activation of the endoribonuclease domain. In response to ER stress, phosphorylated at Ser-724, Ser-729 and possibly Ser-726; phosphorylation promotes oligomerization and endoribonuclease activity. Dephosphorylated at Ser-724, Ser-729 and possibly Ser-726 by RPAP2 to abort failed ER-stress adaptation and trigger apoptosis. Phosphorylated at Ser-724; in response to the ER stressor tunicamycin. In terms of processing, ADP-ribosylated by PARP16 upon ER stress, which increases both kinase and endonuclease activities. As to expression, expressed in liver (at protein level). Ubiquitously expressed. High levels in thymus, liver and lung. In the brain, preferentially expressed in cortical, hippocampal and olfactory neurons.

It is found in the endoplasmic reticulum membrane. The catalysed reaction is L-seryl-[protein] + ATP = O-phospho-L-seryl-[protein] + ADP + H(+). It catalyses the reaction L-threonyl-[protein] + ATP = O-phospho-L-threonyl-[protein] + ADP + H(+). With respect to regulation, the kinase domain is activated by trans-autophosphorylation following homodimerization. Kinase activity is required for activation of the endoribonuclease domain. Endoribonuclease activity is specifically inhibited by hydroxy-aryl-aldehydes (HAA) MKC9989, OICR464 and OICR573. In terms of biological role, serine/threonine-protein kinase and endoribonuclease that acts as a key sensor for the endoplasmic reticulum unfolded protein response (UPR). In unstressed cells, the endoplasmic reticulum luminal domain is maintained in its inactive monomeric state by binding to the endoplasmic reticulum chaperone HSPA5/BiP. Accumulation of misfolded protein in the endoplasmic reticulum causes release of HSPA5/BiP, allowing the luminal domain to homodimerize, promoting autophosphorylation of the kinase domain and subsequent activation of the endoribonuclease activity. The endoribonuclease activity is specific for XBP1 mRNA and excises 26 nucleotides from XBP1 mRNA. The resulting spliced transcript of XBP1 encodes a transcriptional activator protein that up-regulates expression of UPR target genes. Acts as an upstream signal for ER stress-induced GORASP2-mediated unconventional (ER/Golgi-independent) trafficking of CFTR to cell membrane by modulating the expression and localization of SEC16A. This Mus musculus (Mouse) protein is Serine/threonine-protein kinase/endoribonuclease IRE1.